The sequence spans 535 residues: Ribonuclease Y (535 aa).

Residues 30–50 (IWALPALVIGLAIGAGIGILI) form a helical membrane-spanning segment. The region spanning 225–285 (TVSTVALPSE…VRREVARLAL (61 aa)) is the KH domain. The HD domain maps to 351 to 444 (VLQHSLECAL…VQAVDAISGG (94 aa)).

This sequence belongs to the RNase Y family.

It localises to the cell membrane. Endoribonuclease that initiates mRNA decay. This chain is Ribonuclease Y, found in Roseiflexus sp. (strain RS-1).